The sequence spans 388 residues: MDMQISRQQAAGGASGHLTIDLGALRDNYLTLAGMAPASQTAAVVKADAYGLGADVVSQTLFEAGCRNFFVAHIDEALALRLRLSAKARIFVLNGLQPGNETSCAAMAITPVLNSLEQIAQWSAHARELGKTLTAAVQIDTGMCRLGLSPEELEILSAKQQLLDGIEIAFVMSHLACADEPDHVSNAAQLAVMRKAATAFPETPVCFSNSGGIFLGNDYHNALLRPGIALYGGAPSAAGPNPMKPVVRLDVAVIQTRTVPAGSLVGYGGSFTASVPTRLATIAAGYADGLPRSLSNRGAAWYNGVRLPIAGRVSMDSIILDISALPEGTLTQGSLVQMIGPDQTLEDIAEDAGTIAYEILTGLGRRYRRSYIQPGMSPATASTSVNHK.

The active-site Proton acceptor; specific for D-alanine is the K46. At K46 the chain carries N6-(pyridoxal phosphate)lysine. R145 is a binding site for substrate. Y267 serves as the catalytic Proton acceptor; specific for L-alanine. M315 contributes to the substrate binding site.

It belongs to the alanine racemase family. Requires pyridoxal 5'-phosphate as cofactor.

The catalysed reaction is L-alanine = D-alanine. Isomerizes L-alanine to D-alanine which is then oxidized to pyruvate by DadA. This is Alanine racemase, catabolic (dadB) from Agrobacterium fabrum (strain C58 / ATCC 33970) (Agrobacterium tumefaciens (strain C58)).